The primary structure comprises 252 residues: Ditrans,polycis-undecaprenyl-diphosphate synthase ((2E,6E)-farnesyl-diphosphate specific) (252 aa).

The active site involves aspartate 24. Aspartate 24 lines the Mg(2+) pocket. Residues 25-28 (GNGR), tryptophan 29, arginine 37, histidine 41, and 69-71 (SSE) each bind substrate. Asparagine 72 (proton acceptor) is an active-site residue. Residues tryptophan 73, arginine 75, and arginine 192 each coordinate substrate. Position 197 (histidine 197) interacts with Mg(2+). 198 to 200 (RIS) provides a ligand contact to substrate. A Mg(2+)-binding site is contributed by glutamate 211.

Belongs to the UPP synthase family. As to quaternary structure, homodimer. Mg(2+) serves as cofactor.

The catalysed reaction is 8 isopentenyl diphosphate + (2E,6E)-farnesyl diphosphate = di-trans,octa-cis-undecaprenyl diphosphate + 8 diphosphate. In terms of biological role, catalyzes the sequential condensation of isopentenyl diphosphate (IPP) with (2E,6E)-farnesyl diphosphate (E,E-FPP) to yield (2Z,6Z,10Z,14Z,18Z,22Z,26Z,30Z,34E,38E)-undecaprenyl diphosphate (di-trans,octa-cis-UPP). UPP is the precursor of glycosyl carrier lipid in the biosynthesis of bacterial cell wall polysaccharide components such as peptidoglycan and lipopolysaccharide. This Yersinia pestis protein is Ditrans,polycis-undecaprenyl-diphosphate synthase ((2E,6E)-farnesyl-diphosphate specific).